A 108-amino-acid chain; its full sequence is Insulin (108 aa).

Residues 1–24 (MALWMHLLPLLALLALWGPEPAPA) form the signal peptide. Intrachain disulfides connect C31-C94, C43-C107, and C93-C98. The propeptide at 57–85 (EAEDLQVGQVELGGGSITGSLPPLEGPMQ) is c peptide.

The protein belongs to the insulin family. Heterodimer of a B chain and an A chain linked by two disulfide bonds.

It is found in the secreted. Insulin decreases blood glucose concentration. It increases cell permeability to monosaccharides, amino acids and fatty acids. It accelerates glycolysis, the pentose phosphate cycle, and glycogen synthesis in liver. The polypeptide is Insulin (INS) (Aotus trivirgatus (Three-striped night monkey)).